The chain runs to 276 residues: Ribosomal RNA small subunit methyltransferase A (276 aa).

Residues Asn-28, Leu-30, Gly-55, Glu-77, Asp-103, and Asn-124 each contribute to the S-adenosyl-L-methionine site.

Belongs to the class I-like SAM-binding methyltransferase superfamily. rRNA adenine N(6)-methyltransferase family. RsmA subfamily.

Its subcellular location is the cytoplasm. The catalysed reaction is adenosine(1518)/adenosine(1519) in 16S rRNA + 4 S-adenosyl-L-methionine = N(6)-dimethyladenosine(1518)/N(6)-dimethyladenosine(1519) in 16S rRNA + 4 S-adenosyl-L-homocysteine + 4 H(+). Its function is as follows. Specifically dimethylates two adjacent adenosines (A1518 and A1519) in the loop of a conserved hairpin near the 3'-end of 16S rRNA in the 30S particle. May play a critical role in biogenesis of 30S subunits. The sequence is that of Ribosomal RNA small subunit methyltransferase A from Agrobacterium fabrum (strain C58 / ATCC 33970) (Agrobacterium tumefaciens (strain C58)).